Consider the following 344-residue polypeptide: DNA polymerase IV (344 aa).

The UmuC domain maps to 2–183 (IMLIDFDYFF…IKINDIPGIG (182 aa)). Mg(2+)-binding residues include Asp6 and Asp105. Glu106 is an active-site residue.

It belongs to the DNA polymerase type-Y family. In terms of assembly, monomer. Mg(2+) serves as cofactor.

It localises to the cytoplasm. It carries out the reaction DNA(n) + a 2'-deoxyribonucleoside 5'-triphosphate = DNA(n+1) + diphosphate. In terms of biological role, poorly processive, error-prone DNA polymerase involved in untargeted mutagenesis. Copies undamaged DNA at stalled replication forks, which arise in vivo from mismatched or misaligned primer ends. These misaligned primers can be extended by PolIV. Exhibits no 3'-5' exonuclease (proofreading) activity. May be involved in translesional synthesis. The chain is DNA polymerase IV from Picrophilus torridus (strain ATCC 700027 / DSM 9790 / JCM 10055 / NBRC 100828 / KAW 2/3).